A 1268-amino-acid chain; its full sequence is ATP-dependent helicase/nuclease subunit A (1268 aa).

The 474-residue stretch at Thr-3–Arg-476 folds into the UvrD-like helicase ATP-binding domain. Ala-24–Thr-31 is a binding site for ATP. The region spanning Ile-528–Gly-824 is the UvrD-like helicase C-terminal domain.

This sequence belongs to the helicase family. AddA subfamily. Heterodimer of AddA and AddB/RexB. It depends on Mg(2+) as a cofactor.

It catalyses the reaction Couples ATP hydrolysis with the unwinding of duplex DNA by translocating in the 3'-5' direction.. It carries out the reaction ATP + H2O = ADP + phosphate + H(+). In terms of biological role, the heterodimer acts as both an ATP-dependent DNA helicase and an ATP-dependent, dual-direction single-stranded exonuclease. Recognizes the chi site generating a DNA molecule suitable for the initiation of homologous recombination. The AddA nuclease domain is required for chi fragment generation; this subunit has the helicase and 3' -&gt; 5' nuclease activities. The polypeptide is ATP-dependent helicase/nuclease subunit A (Clostridium perfringens (strain 13 / Type A)).